We begin with the raw amino-acid sequence, 703 residues long: Hyperosmolality-gated Ca2+ permeable channel 2.3 (703 aa).

Residues 1 to 3 (MLL) are Extracellular-facing. A helical transmembrane segment spans residues 4–26 (SALLTSVGINLGLCFLFFTLYSI). At 27–81 (LRKQPSNVTVYGPRLVKKDGKSQQSNEFNLERLLPTAGWVKRALEPTNDEILSNL) the chain is on the cytoplasmic side. The chain crosses the membrane as a helical span at residues 82–115 (GLDALVFIRVFVFSIRVFSFASVVGIFILLPVNY). Over 116–143 (MGTEFEEFFDLPKKSMDNFSISNVNDGS) the chain is Extracellular. A helical membrane pass occupies residues 144–165 (NKLWIHFCAIYIFTAVVCSLLY). Residues 166 to 355 (YEHKYILTKR…TASFVRRWIS (190 aa)) are Cytoplasmic-facing. Residues 228 to 300 (RTDKLKVLMN…LKQSLLAGEE (73 aa)) are a coiled coil. A helical membrane pass occupies residues 356-382 (NVVVLVAFVALLILYIVPVVLVQGLAN). Over 383–410 (LHQLETWFPFLKGILNMKIVSQVITGYL) the chain is Extracellular. Residues 411–432 (PSLIFQLFLLIVPPIMLLLSSM) form a helical membrane-spanning segment. Over 433 to 436 (QGFI) the chain is Cytoplasmic. The chain crosses the membrane as a helical span at residues 437-463 (SHSQIEKSACIKLLIFTVWNSFFANVL). The Extracellular portion of the chain corresponds to 464 to 489 (SGSALYRVNVFLEPKTIPRVLAAAVP). The helical transmembrane segment at 490–512 (AQASFFVSYVVTSGWTGLSSEIL) threads the bilayer. Residues 513 to 540 (RLVPLLWSFITKLFGKEDDKEFEVPSTP) are Cytoplasmic-facing. A helical membrane pass occupies residues 541–561 (FCQEIPRILFFGLLGITYFFL). Ser562 is a topological domain (extracellular). Residues 563–586 (PLILPFLLVYYCLGYIIYRNQLLN) form a helical membrane-spanning segment. The Cytoplasmic segment spans residues 587 to 598 (VYAAKYETGGKF). The helical transmembrane segment at 599–623 (WPIVHSYTIFSLVLMHIIAVGLFGL) threads the bilayer. The Extracellular segment spans residues 624 to 626 (KEL). Residues 627–655 (PVASSLTIPLPVLTVLFSIYCQRRFLPNF) form a helical membrane-spanning segment. The Cytoplasmic portion of the chain corresponds to 656-703 (KSYPTQCLVNKDKADEREQNMSEFYSELVVAYRDPALSASQDSRDISP).

The protein belongs to the CSC1 (TC 1.A.17) family. Homodimer.

The protein localises to the membrane. Functionally, acts as an osmosensitive calcium-permeable cation channel. In Arabidopsis thaliana (Mouse-ear cress), this protein is Hyperosmolality-gated Ca2+ permeable channel 2.3.